The sequence spans 53 residues: MEQKNKKNTIPWIWGFNVYAENWNGRLAMISFLLIICVEFITNKNVLDLVKLN.

The protein belongs to the ELIP/psbS family.

The protein resides in the plastid. The protein localises to the chloroplast. Possible role in chlorophyll and/or carotenoid binding. This is an uncharacterized protein from Guillardia theta (Cryptophyte).